A 49-amino-acid polypeptide reads, in one-letter code: Multidrug efflux pump accessory protein AcrZ (49 aa).

The Periplasmic segment spans residues 1–7; it reads MLELLKS. Residues 8 to 28 form a helical membrane-spanning segment; the sequence is LVFAVIMVPVVMAIILGLIYG. At 29–49 the chain is on the cytoplasmic side; that stretch reads LGEVFNIFSGVGKKDQPGQNH.

This sequence belongs to the AcrZ family. In terms of assembly, part of the AcrA-AcrB-AcrZ-TolC efflux pump, interacts directly with AcrB.

It is found in the cell inner membrane. AcrA-AcrB-AcrZ-TolC is a drug efflux protein complex with a broad substrate specificity. This protein binds to AcrB and is required for efflux of some but not all substrates, suggesting it may influence the specificity of drug export. In Escherichia coli O157:H7, this protein is Multidrug efflux pump accessory protein AcrZ.